We begin with the raw amino-acid sequence, 488 residues long: ATP synthase subunit beta (488 aa).

Position 164–171 (164–171) interacts with ATP; the sequence is GGAGVGKT.

Belongs to the ATPase alpha/beta chains family. In terms of assembly, F-type ATPases have 2 components, CF(1) - the catalytic core - and CF(0) - the membrane proton channel. CF(1) has five subunits: alpha(3), beta(3), gamma(1), delta(1), epsilon(1). CF(0) has four main subunits: a(1), b(1), b'(1) and c(9-12).

The protein localises to the cellular thylakoid membrane. The catalysed reaction is ATP + H2O + 4 H(+)(in) = ADP + phosphate + 5 H(+)(out). Produces ATP from ADP in the presence of a proton gradient across the membrane. The catalytic sites are hosted primarily by the beta subunits. The sequence is that of ATP synthase subunit beta from Prochlorococcus marinus (strain MIT 9313).